A 420-amino-acid chain; its full sequence is Fasciclin-like arabinogalactan protein 4 (420 aa).

The signal sequence occupies residues 1–28 (MANVISISHFTLLALPYLLLLLSSTAAA). FAS1 domains lie at 29 to 177 (INVT…DSLI) and 205 to 351 (GINL…SKVL). N-linked (GlcNAc...) asparagine glycans are attached at residues N30, N40, N135, N154, N167, N207, N312, and N317. Positions 360-388 (SGQPVATAPPQEISLSPESSSEQPSRLVS) are disordered. Residues 368-384 (PPQEISLSPESSSEQPS) are compositionally biased toward low complexity. S396 carries GPI-anchor amidated serine lipidation. The propeptide at 397–420 (GAVKRPLGFLVLWCWCIAFCYVLV) is removed in mature form.

This sequence belongs to the fasciclin-like AGP family. As to expression, expressed in all plant organs and tissues, including guard cells in the leaf.

Its subcellular location is the cell membrane. In terms of biological role, may be a cell surface adhesion protein that is required for normal cell expansion. The protein is Fasciclin-like arabinogalactan protein 4 (FLA4) of Arabidopsis thaliana (Mouse-ear cress).